A 180-amino-acid chain; its full sequence is Prorelaxin (180 aa).

Residues 1–25 form the signal peptide; it reads MLRLFLSHLLGVWLLLSLRARKIPA. 3 disulfides stabilise this stretch: C33–C167, C45–C180, and C166–C171. Residues 53–154 constitute a propeptide, connecting peptide; the sequence is SSQQHREPRQ…RSRLDAHSRI (102 aa).

Belongs to the insulin family. In terms of assembly, heterodimer of a B chain and an A chain linked by two disulfide bonds. As to expression, expressed by the placenta. Exclusively detected in cells located in the lamellar placental labyrinth and absent from other placental and non-placental uterine parts.

The protein localises to the secreted. In terms of biological role, relaxin is an ovarian hormone that acts with estrogen to produce dilatation of the birth canal in many mammals. In Felis catus (Cat), this protein is Prorelaxin (RLN).